Consider the following 324-residue polypeptide: Beta-ketoacyl-[acyl-carrier-protein] synthase III (324 aa).

Catalysis depends on residues cysteine 113 and histidine 251. Residues 252-256 (QANKR) form an ACP-binding region. Residue asparagine 281 is part of the active site.

It belongs to the thiolase-like superfamily. FabH family. Homodimer.

The protein resides in the cytoplasm. The enzyme catalyses malonyl-[ACP] + acetyl-CoA + H(+) = 3-oxobutanoyl-[ACP] + CO2 + CoA. Its pathway is lipid metabolism; fatty acid biosynthesis. In terms of biological role, catalyzes the condensation reaction of fatty acid synthesis by the addition to an acyl acceptor of two carbons from malonyl-ACP. Catalyzes the first condensation reaction which initiates fatty acid synthesis and may therefore play a role in governing the total rate of fatty acid production. Possesses both acetoacetyl-ACP synthase and acetyl transacylase activities. Its substrate specificity determines the biosynthesis of branched-chain and/or straight-chain of fatty acids. The protein is Beta-ketoacyl-[acyl-carrier-protein] synthase III of Bartonella bacilliformis (strain ATCC 35685 / KC583 / Herrer 020/F12,63).